The sequence spans 258 residues: MKFNRMTLIASPTPKAQKAAEELKKLYQWYPLEEADVIIALGGDGFMLQTLHHLLDNSFNLPVFGMNLGTVGFLMNEWRPSNLLRRLIRAKQFTVYPLRMDGQTVSGEQKIYRAINEVSMLRETRQTAHLEISVDGRIVLPELVSDGVLVATPAGSTAYNLSADGPILPFDSGMLALTPISPFRPRRWRGAIVPDGSIIDMRVVDPDKRPMSAVADQRELREIANVTITLDRTTPLHLLFDPNHALDDRIAREQFRLC.

Aspartate 44 serves as the catalytic Proton acceptor. Residues 44–45 (DG), 116–117 (NE), aspartate 146, alanine 154, and 157–162 (TAYNLS) each bind NAD(+).

This sequence belongs to the NAD kinase family. The cofactor is a divalent metal cation.

It is found in the cytoplasm. It carries out the reaction NAD(+) + ATP = ADP + NADP(+) + H(+). Functionally, involved in the regulation of the intracellular balance of NAD and NADP, and is a key enzyme in the biosynthesis of NADP. Catalyzes specifically the phosphorylation on 2'-hydroxyl of the adenosine moiety of NAD to yield NADP. The sequence is that of NAD kinase from Zymomonas mobilis subsp. mobilis (strain ATCC 31821 / ZM4 / CP4).